Reading from the N-terminus, the 116-residue chain is Flagellar transcriptional regulator FlhD (116 aa).

This sequence belongs to the FlhD family. Homodimer; disulfide-linked. Forms a heterohexamer composed of two FlhC and four FlhD subunits. Each FlhC binds a FlhD dimer, forming a heterotrimer, and a hexamer assembles by dimerization of two heterotrimers.

The protein localises to the cytoplasm. Its function is as follows. Functions in complex with FlhC as a master transcriptional regulator that regulates transcription of several flagellar and non-flagellar operons by binding to their promoter region. Activates expression of class 2 flagellar genes, including fliA, which is a flagellum-specific sigma factor that turns on the class 3 genes. Also regulates genes whose products function in a variety of physiological pathways. The polypeptide is Flagellar transcriptional regulator FlhD (Pantoea ananatis (strain LMG 20103)).